Consider the following 150-residue polypeptide: Arginine repressor (150 aa).

Belongs to the ArgR family.

Its subcellular location is the cytoplasm. It participates in amino-acid biosynthesis; L-arginine biosynthesis [regulation]. Regulates arginine biosynthesis genes. This chain is Arginine repressor, found in Clostridium botulinum (strain 657 / Type Ba4).